We begin with the raw amino-acid sequence, 214 residues long: Adenylate kinase (214 aa).

10-15 (GAGKGT) is an ATP binding site. An NMP region spans residues 30-59 (STGDMLRAAVKAGTPLGLEAKKVMDAGQLV). Residues Thr31, Arg36, 57-59 (QLV), 85-88 (GFPR), and Gln92 each bind AMP. The segment at 122-159 (GRRVHPGSGRVYHIVFNQPKVEGKDDVTGEDLAIRPDD) is LID. ATP-binding positions include Arg123 and 132-133 (VY). Residues Arg156 and Arg167 each contribute to the AMP site. Residue Gln200 coordinates ATP.

This sequence belongs to the adenylate kinase family. Monomer.

The protein localises to the cytoplasm. The enzyme catalyses AMP + ATP = 2 ADP. Its pathway is purine metabolism; AMP biosynthesis via salvage pathway; AMP from ADP: step 1/1. In terms of biological role, catalyzes the reversible transfer of the terminal phosphate group between ATP and AMP. Plays an important role in cellular energy homeostasis and in adenine nucleotide metabolism. The protein is Adenylate kinase of Shewanella piezotolerans (strain WP3 / JCM 13877).